Here is a 476-residue protein sequence, read N- to C-terminus: MSKSALPKRLIEIPEMRRIKSIHFIGVGGAGMCGIAEVMKNQGYGVSGSDIKESPVTKRLQSLGIEVFIGHDSKNIANADVVVVSSAIDRENPEIQAALKAQLPVVRRADMLGELMRYRHGIAVAGAHGKTTTTSLLTMMMTEAGFDPTYVIGGKLNASGKNASLGESRYLIAEADESDASFLTLHPMAAIVTNIDQDHMDTYGNSFDKLKAAYIQFLQNMPFYGLAVVCGDDKELFDMIDDIGRPVLTFGLEPHNNVQATNVRVDGTKTHFTVLRKDREPLELTLNIPGQHNVLNALAAITMATDEGVNDDAIKRALAKFAGVGRRFEQQACVAKDDGDVLLIDDYGHHPVEVAATIKAARASYPERRLVMLFQPHRYSRTRDCYDDFVAVLSQVDVLLLLDVYSAGEAPIVGADTKSLARSIRLRGEVEPVVVDKDELAPVMQRVLQAGDMLITQGAGNVGQLSQQLAANNLYL.

126 to 132 (GAHGKTT) is a binding site for ATP.

It belongs to the MurCDEF family.

The protein resides in the cytoplasm. It carries out the reaction UDP-N-acetyl-alpha-D-muramate + L-alanine + ATP = UDP-N-acetyl-alpha-D-muramoyl-L-alanine + ADP + phosphate + H(+). Its pathway is cell wall biogenesis; peptidoglycan biosynthesis. Cell wall formation. The sequence is that of UDP-N-acetylmuramate--L-alanine ligase from Psychrobacter sp. (strain PRwf-1).